The following is an 85-amino-acid chain: Small ribosomal subunit protein bS18c (85 aa).

It belongs to the bacterial ribosomal protein bS18 family. As to quaternary structure, part of the 30S ribosomal subunit.

Its subcellular location is the plastid. The protein localises to the chloroplast. The polypeptide is Small ribosomal subunit protein bS18c (Zygnema circumcarinatum (Green alga)).